We begin with the raw amino-acid sequence, 901 residues long: HTH-type transcriptional regulator MalT (901 aa).

39-46 (SPAGYGKT) is a binding site for ATP. The 66-residue stretch at 829–894 (ELIRTSPLTQ…DAVQHAQQLL (66 aa)) folds into the HTH luxR-type domain. The segment at residues 853 to 872 (NEQIAGELAVAATTIKTHIR) is a DNA-binding region (H-T-H motif).

This sequence belongs to the MalT family. Monomer in solution. Oligomerizes to an active state in the presence of the positive effectors ATP and maltotriose.

Activated by ATP and maltotriose, which are both required for DNA binding. Its function is as follows. Positively regulates the transcription of the maltose regulon whose gene products are responsible for uptake and catabolism of malto-oligosaccharides. Specifically binds to the promoter region of its target genes, recognizing a short DNA motif called the MalT box. This Salmonella heidelberg (strain SL476) protein is HTH-type transcriptional regulator MalT.